Consider the following 601-residue polypeptide: HIRA-interacting protein 3 (601 aa).

Disordered stretches follow at residues 60 to 469 (KMQA…EDHP) and 546 to 601 (STGR…GDSS). A compositionally biased stretch (basic and acidic residues) spans 66 to 76 (GTREGKPDFIK). 3 positions are modified to phosphoserine: S85, S96, and S98. The segment covering 97 to 113 (ESESSSSPSSPDGSGPS) has biased composition (low complexity). Residues 117-129 (RTTKKTCLRRALK) show a composition bias toward basic residues. Basic and acidic residues predominate over residues 130–149 (KAVESTDEDHQTDLDAKMGL). S134 is subject to Phosphoserine. 2 positions are modified to phosphothreonine: T135 and T141. 3 positions are modified to phosphoserine: S152, S153, and S163. T167 is modified (phosphothreonine). Positions 186-205 (GAKDKQVPLKADRKQVREES) are enriched in basic and acidic residues. Residues S205, S207, S208, S231, S234, S238, S313, S359, S360, S384, and S389 each carry the phosphoserine modification. Composition is skewed to basic and acidic residues over residues 238–264 (SPAKKKELSEPRSRSNRAERTARERKS) and 313–324 (SSEKGEAEKEEG). A compositionally biased stretch (polar residues) spans 347 to 378 (RTQTESGRRQNTSSRDDSNSTQEQAAAQGTTK). Residues 379–388 (SGSLGSSNGD) show a composition bias toward low complexity. T391 is modified (phosphothreonine). 2 positions are modified to phosphoserine: S396 and S398. Residues 413–432 (SNKSSKNGQARSCSSSSDSS) are compositionally biased toward low complexity. Positions 429–572 (SDSSPEPTGQ…TSPGETYRRT (144 aa)) are interaction with the histone H2A-H2B complex. Positions 556–566 (WNPSGEGTSPG) are enriched in polar residues. S564, S575, S595, S596, and S600 each carry phosphoserine. Over residues 568-580 (TYRRTLDSEEEQP) the composition is skewed to basic and acidic residues.

As to quaternary structure, interacts (via C-terminus) with histone H2A-H2B dimers; the interaction is direct. Interacts with HIRA. Interacts with CK2. In terms of processing, phosphorylated by CK2.

The protein localises to the nucleus. Its function is as follows. Histone chaperone that carries a H2A-H2B histone complex and facilitates its deposition onto chromatin. In Mus musculus (Mouse), this protein is HIRA-interacting protein 3.